We begin with the raw amino-acid sequence, 358 residues long: Probable protein phosphatase 2C 68 (358 aa).

Residues 74-352 (RHGAASVAGR…DNISVVVVDL (279 aa)) form the PPM-type phosphatase domain. Aspartate 117, glycine 118, aspartate 298, and aspartate 343 together coordinate Mn(2+).

The protein belongs to the PP2C family. Mg(2+) is required as a cofactor. Mn(2+) serves as cofactor.

Its subcellular location is the nucleus. The protein localises to the cytoplasm. It is found in the cytosol. It carries out the reaction O-phospho-L-seryl-[protein] + H2O = L-seryl-[protein] + phosphate. The enzyme catalyses O-phospho-L-threonyl-[protein] + H2O = L-threonyl-[protein] + phosphate. Functionally, involved in the regulation of abiotic stress responses. Acts as a negative regulator of abscisic acid (ABA) signaling and positive regulator of abiotic stress signaling. May be involved in panicle development. This is Probable protein phosphatase 2C 68 from Oryza sativa subsp. japonica (Rice).